Reading from the N-terminus, the 63-residue chain is Small ribosomal subunit protein bS21 (63 aa).

Belongs to the bacterial ribosomal protein bS21 family.

The sequence is that of Small ribosomal subunit protein bS21 from Azobacteroides pseudotrichonymphae genomovar. CFP2.